Here is a 359-residue protein sequence, read N- to C-terminus: Probable dual-specificity RNA methyltransferase RlmN (359 aa).

The active-site Proton acceptor is the Glu-100. One can recognise a Radical SAM core domain in the interval 106–340 (TDKRLTVCVS…VSVRASRGRD (235 aa)). Cys-113 and Cys-345 are oxidised to a cystine. Positions 120, 124, and 127 each coordinate [4Fe-4S] cluster. Residues 167–168 (GE), Ser-197, 226–228 (SLH), and Asn-302 each bind S-adenosyl-L-methionine. Residue Cys-345 is the S-methylcysteine intermediate of the active site.

The protein belongs to the radical SAM superfamily. RlmN family. The cofactor is [4Fe-4S] cluster.

It localises to the cytoplasm. It catalyses the reaction adenosine(2503) in 23S rRNA + 2 reduced [2Fe-2S]-[ferredoxin] + 2 S-adenosyl-L-methionine = 2-methyladenosine(2503) in 23S rRNA + 5'-deoxyadenosine + L-methionine + 2 oxidized [2Fe-2S]-[ferredoxin] + S-adenosyl-L-homocysteine. The enzyme catalyses adenosine(37) in tRNA + 2 reduced [2Fe-2S]-[ferredoxin] + 2 S-adenosyl-L-methionine = 2-methyladenosine(37) in tRNA + 5'-deoxyadenosine + L-methionine + 2 oxidized [2Fe-2S]-[ferredoxin] + S-adenosyl-L-homocysteine. Specifically methylates position 2 of adenine 2503 in 23S rRNA and position 2 of adenine 37 in tRNAs. This is Probable dual-specificity RNA methyltransferase RlmN from Prochlorococcus marinus (strain NATL2A).